Reading from the N-terminus, the 245-residue chain is Putative insertion sequence ATP-binding protein y4pL (245 aa).

Position 106-113 (106-113 (GPSGVGKS)) interacts with ATP.

This sequence belongs to the IS21/IS1162 putative ATP-binding protein family.

The chain is Putative insertion sequence ATP-binding protein y4pL from Sinorhizobium fredii (strain NBRC 101917 / NGR234).